Here is a 264-residue protein sequence, read N- to C-terminus: Type III pantothenate kinase (264 aa).

ATP is bound at residue 6–13 (DSGNSRLK). Substrate-binding positions include Tyr92 and 99–102 (GADR). Asp101 (proton acceptor) is an active-site residue. Thr127 lines the ATP pocket. Substrate is bound at residue Thr177.

Belongs to the type III pantothenate kinase family. As to quaternary structure, homodimer. It depends on NH4(+) as a cofactor. The cofactor is K(+).

It localises to the cytoplasm. The catalysed reaction is (R)-pantothenate + ATP = (R)-4'-phosphopantothenate + ADP + H(+). Its pathway is cofactor biosynthesis; coenzyme A biosynthesis; CoA from (R)-pantothenate: step 1/5. In terms of biological role, catalyzes the phosphorylation of pantothenate (Pan), the first step in CoA biosynthesis. This Bordetella petrii (strain ATCC BAA-461 / DSM 12804 / CCUG 43448) protein is Type III pantothenate kinase.